We begin with the raw amino-acid sequence, 836 residues long: Subtilisin-like protease PIMMS2 (836 aa).

Residues Asp-155, His-222, and Ser-414 each act as charge relay system in the active site. The tract at residues 802 to 836 (EKKNKYNNSVLKRNEMKSHNNSQKTPKIIPRKYSR) is disordered.

It belongs to the peptidase S8 family.

It localises to the cell membrane. It carries out the reaction Hydrolysis of proteins with broad specificity for peptide bonds, and a preference for a large uncharged residue in P1. Hydrolyzes peptide amides.. Probable serine protease which plays a role in ookinete traversal of the mosquito host midgut epithelium. This is Subtilisin-like protease PIMMS2 from Plasmodium berghei (strain Anka).